The chain runs to 179 residues: CDP-archaeol synthase (179 aa).

4 helical membrane-spanning segments follow: residues 53–73 (FVGGVAGGVLTANLQYAIEKL), 88–108 (FTLTFLLAFGAMFGDLCGSFI), 120–140 (FLIVDQLMFLLVALLIASLYP), and 145–165 (LFTAEIIALAVIITPALHMGI).

The protein belongs to the CDP-archaeol synthase family. It depends on Mg(2+) as a cofactor.

It localises to the cell membrane. It catalyses the reaction 2,3-bis-O-(geranylgeranyl)-sn-glycerol 1-phosphate + CTP + H(+) = CDP-2,3-bis-O-(geranylgeranyl)-sn-glycerol + diphosphate. It participates in membrane lipid metabolism; glycerophospholipid metabolism. Catalyzes the formation of CDP-2,3-bis-(O-geranylgeranyl)-sn-glycerol (CDP-archaeol) from 2,3-bis-(O-geranylgeranyl)-sn-glycerol 1-phosphate (DGGGP) and CTP. This reaction is the third ether-bond-formation step in the biosynthesis of archaeal membrane lipids. Can use CTP or dCTP, but not ATP, GTP or TTP. In Archaeoglobus fulgidus (strain ATCC 49558 / DSM 4304 / JCM 9628 / NBRC 100126 / VC-16), this protein is CDP-archaeol synthase.